The primary structure comprises 407 residues: Obg-like ATPase homolog (407 aa).

Residues 46–301 (LKIGIVGMPN…LTPEEAAQEC (256 aa)) form the OBG-type G domain. Residues 55 to 60 (NIGKST) and methionine 249 each bind ATP. In terms of domain architecture, TGS spans 322 to 405 (NLIHYFTASE…EPGDIIFWKI (84 aa)).

It belongs to the TRAFAC class OBG-HflX-like GTPase superfamily. OBG GTPase family.

Its function is as follows. Hydrolyzes ATP, and can also hydrolyze GTP with lower efficiency. Has lower affinity for GTP. The sequence is that of Obg-like ATPase homolog from Schizosaccharomyces pombe (strain 972 / ATCC 24843) (Fission yeast).